The following is a 357-amino-acid chain: MAEFVRAQIFGTTFEITSRYTDLQPVGMGAFGLVCSAKDQLTGQAVAVKKIMKPFSTPVLSKRTYRELKLLKHLKHENVISLSDIFISPLEDIYFVTELLGTDLHRLLTSRPLEKQFIQYFLYQILRGLKYVHSAGVVHRDLKPSNILVNENCDLKICDFGLARIQDPQMTGYVSTRYYRAPEIMLTWQKYDVEVDIWSAGCIFAEMLEGKPLFPGKDHVNQFSIITDLLGTPPDDVISTICSENTLRFVQSLPKRERQPLKNKFKNADPQAIELLERMLVFDPRKRVKAGEALADPYLSPYHDPTDEPEAEEKFDWSFNDADLPVDTWKIMMYSEILDYHNVDSANNGEGQENGGA.

The Protein kinase domain occupies 20-299 (YTDLQPVGMG…AGEALADPYL (280 aa)). Residues 26-34 (VGMGAFGLV) and lysine 49 contribute to the ATP site. The Proton acceptor role is filled by aspartate 141. Threonine 171 carries the post-translational modification Phosphothreonine. Positions 171–173 (TGY) match the TXY motif. Residue tyrosine 173 is modified to Phosphotyrosine.

The protein belongs to the protein kinase superfamily. Ser/Thr protein kinase family. MAP kinase subfamily. HOG1 sub-subfamily. It depends on Mg(2+) as a cofactor. Post-translationally, dually phosphorylated on Thr-171 and Tyr-173, which activates the enzyme.

The protein resides in the cytoplasm. The protein localises to the nucleus. The catalysed reaction is L-seryl-[protein] + ATP = O-phospho-L-seryl-[protein] + ADP + H(+). It carries out the reaction L-threonyl-[protein] + ATP = O-phospho-L-threonyl-[protein] + ADP + H(+). Activated by tyrosine and threonine phosphorylation. Functionally, proline-directed serine/threonine-protein kinase involved in a signal transduction pathway that is activated by changes in the osmolarity of the extracellular environment. Controls osmotic regulation of transcription of target genes. The polypeptide is Mitogen-activated protein kinase Hog1 (Hog1) (Zymoseptoria tritici (strain CBS 115943 / IPO323) (Speckled leaf blotch fungus)).